The following is a 55-amino-acid chain: ATP synthase F(0) complex subunit 8 (55 aa).

The chain crosses the membrane as a helical span at residues 10–32; the sequence is FFIMLASWLTFSLIIQPKLLTFV.

Belongs to the ATPase protein 8 family. As to quaternary structure, component of the ATP synthase complex composed at least of ATP5F1A/subunit alpha, ATP5F1B/subunit beta, ATP5MC1/subunit c (homooctomer), MT-ATP6/subunit a, MT-ATP8/subunit 8, ATP5ME/subunit e, ATP5MF/subunit f, ATP5MG/subunit g, ATP5MK/subunit k, ATP5MJ/subunit j, ATP5F1C/subunit gamma, ATP5F1D/subunit delta, ATP5F1E/subunit epsilon, ATP5PF/subunit F6, ATP5PB/subunit b, ATP5PD/subunit d, ATP5PO/subunit OSCP. ATP synthase complex consists of a soluble F(1) head domain (subunits alpha(3) and beta(3)) - the catalytic core - and a membrane F(0) domain - the membrane proton channel (subunits c, a, 8, e, f, g, k and j). These two domains are linked by a central stalk (subunits gamma, delta, and epsilon) rotating inside the F1 region and a stationary peripheral stalk (subunits F6, b, d, and OSCP).

It localises to the mitochondrion membrane. Its function is as follows. Subunit 8, of the mitochondrial membrane ATP synthase complex (F(1)F(0) ATP synthase or Complex V) that produces ATP from ADP in the presence of a proton gradient across the membrane which is generated by electron transport complexes of the respiratory chain. ATP synthase complex consist of a soluble F(1) head domain - the catalytic core - and a membrane F(1) domain - the membrane proton channel. These two domains are linked by a central stalk rotating inside the F(1) region and a stationary peripheral stalk. During catalysis, ATP synthesis in the catalytic domain of F(1) is coupled via a rotary mechanism of the central stalk subunits to proton translocation. In vivo, can only synthesize ATP although its ATP hydrolase activity can be activated artificially in vitro. Part of the complex F(0) domain. The chain is ATP synthase F(0) complex subunit 8 from Loxigilla noctis (Lesser Antillean bullfinch).